Here is a 567-residue protein sequence, read N- to C-terminus: Vacuolar fusion protein MON1 homolog (567 aa).

Disordered regions lie at residues 1-52 (MDMD…DDEG) and 65-129 (TSAS…DDTS). The span at 7–19 (TNNPSPPGPPDSP) shows a compositional bias: pro residues. Positions 43-52 (DDYDDDDDEG) are enriched in acidic residues.

It belongs to the MON1/SAND family. Interacts with CCZ1A, CCZ1B and RABF2B.

It is found in the endosome. The protein localises to the prevacuolar compartment. In terms of biological role, plays an important role in membrane trafficking through the secretory apparatus. In complex with CCZ1, acts as a guanine exchange factor (GEF) for Rab7 protein family. Promotes the exchange of GDP to GTP, converting it from an inactive GDP-bound form into an active GTP-bound form. The active form is involved in protein trafficking from prevacuolar compartments (PVCs) to vacuoles. May serve as a linker between Rab5 and Rab7 protein families in PVCs and mediate PVC maturation. The chain is Vacuolar fusion protein MON1 homolog from Oryza sativa subsp. japonica (Rice).